The sequence spans 258 residues: Acetylglutamate kinase (258 aa).

Residues 40–41, Arg62, and Asn158 each bind substrate; that span reads GG.

Belongs to the acetylglutamate kinase family. ArgB subfamily.

It is found in the cytoplasm. It carries out the reaction N-acetyl-L-glutamate + ATP = N-acetyl-L-glutamyl 5-phosphate + ADP. It participates in amino-acid biosynthesis; L-arginine biosynthesis; N(2)-acetyl-L-ornithine from L-glutamate: step 2/4. Functionally, catalyzes the ATP-dependent phosphorylation of N-acetyl-L-glutamate. This Azobacteroides pseudotrichonymphae genomovar. CFP2 protein is Acetylglutamate kinase.